A 594-amino-acid chain; its full sequence is CTP synthase (594 aa).

The amidoligase domain stretch occupies residues 1–272 (MARPKNVKYV…DLRVLKKLGL (272 aa)). S18 provides a ligand contact to CTP. S18 is a UTP binding site. 19-24 (SLGKGI) lines the ATP pocket. Residue Y59 coordinates L-glutamine. D76 provides a ligand contact to ATP. Mg(2+)-binding residues include D76 and E146. CTP-binding positions include 153–155 (DIE), 193–198 (KTKPTQ), and K229. Residues 193–198 (KTKPTQ) and K229 contribute to the UTP site. The region spanning 299–543 (TIVVCGKYTE…VGAAKSYAAV (245 aa)) is the Glutamine amidotransferase type-1 domain. G363 provides a ligand contact to L-glutamine. The active-site Nucleophile; for glutamine hydrolysis is C390. L-glutamine contacts are provided by residues 391–394 (LGMQ), E414, and R471. Catalysis depends on residues H516 and E518. Positions 562 to 571 (AEAYAAYSEE) are enriched in low complexity. The interval 562 to 594 (AEAYAAYSEESSAESKSFFPDNGGHDEERDSGQ) is disordered. Positions 584–594 (GGHDEERDSGQ) are enriched in basic and acidic residues.

Belongs to the CTP synthase family. In terms of assembly, homotetramer.

It carries out the reaction UTP + L-glutamine + ATP + H2O = CTP + L-glutamate + ADP + phosphate + 2 H(+). The catalysed reaction is L-glutamine + H2O = L-glutamate + NH4(+). The enzyme catalyses UTP + NH4(+) + ATP = CTP + ADP + phosphate + 2 H(+). It functions in the pathway pyrimidine metabolism; CTP biosynthesis via de novo pathway; CTP from UDP: step 2/2. With respect to regulation, allosterically activated by GTP, when glutamine is the substrate; GTP has no effect on the reaction when ammonia is the substrate. The allosteric effector GTP functions by stabilizing the protein conformation that binds the tetrahedral intermediate(s) formed during glutamine hydrolysis. Inhibited by the product CTP, via allosteric rather than competitive inhibition. Functionally, catalyzes the ATP-dependent amination of UTP to CTP with either L-glutamine or ammonia as the source of nitrogen. Regulates intracellular CTP levels through interactions with the four ribonucleotide triphosphates. The sequence is that of CTP synthase from Chlorobium phaeovibrioides (strain DSM 265 / 1930) (Prosthecochloris vibrioformis (strain DSM 265)).